We begin with the raw amino-acid sequence, 194 residues long: CD-NTase-associated protein 15 (194 aa).

The interval 1–73 (MRMWELLPSK…DYLKHKFCPD (73 aa)) is required for cell toxicity. 2 consecutive transmembrane segments (helical) span residues 15 to 35 (ISTI…GQPV) and 43 to 63 (ITTI…YFYI).

Belongs to the CBASS Cap15 membrane effector family. In terms of assembly, the beta barrel domain oligomerizes; in the presence of cyclic nucleotides (probably 3',3'-cGAMP, but the cognate CD-NTase makes at least 4 other cyclic nucleotides) higher-level oligomers are detected.

The protein localises to the cell inner membrane. Its function is as follows. Effector protein of a CBASS antivirus system. CBASS (cyclic oligonucleotide-based antiphage signaling system) provides immunity against bacteriophages. The CD-NTase protein (CdnB) synthesizes cyclic nucleotides in response to infection; these serve as specific second messenger signals. The signals activate a diverse range of effectors, leading to bacterial cell death and thus abortive phage infection. Causes cell death in response to 3',3'-cGAMP upon coexpression in E.coli with V.cholerae DncV; inactivating DncV prevents cell death. Upon induction in E.coli with non-cognate DncV, the cell inner membrane shrinks and separates from the cell wall with a concomitant increase in the periplasm. Binds cyclic nucleotide second messenger 3',3'-cGAMP, probably oligomerizing, and induces cell membrane shrinkage and rupture, leading to cell death. A type I CBASS system. In terms of biological role, protects E.coli against phage infection. When the CBASS operon (cdnB-cap15) is introduced in E.coli MG1655 there is about 100-fold protection against phage T2 and about 10-fold protection against phage T5 and T6. In Escherichia albertii, this protein is CD-NTase-associated protein 15.